The sequence spans 177 residues: ATP-dependent protease subunit HslV (177 aa).

Thr-6 is a catalytic residue. Na(+) is bound by residues Ser-161, Cys-164, and Thr-167.

This sequence belongs to the peptidase T1B family. HslV subfamily. As to quaternary structure, a double ring-shaped homohexamer of HslV is capped on each side by a ring-shaped HslU homohexamer. The assembly of the HslU/HslV complex is dependent on binding of ATP.

It localises to the cytoplasm. The enzyme catalyses ATP-dependent cleavage of peptide bonds with broad specificity.. Allosterically activated by HslU binding. Functionally, protease subunit of a proteasome-like degradation complex believed to be a general protein degrading machinery. The polypeptide is ATP-dependent protease subunit HslV (Thermodesulfovibrio yellowstonii (strain ATCC 51303 / DSM 11347 / YP87)).